A 406-amino-acid polypeptide reads, in one-letter code: Phosphopentomutase (406 aa).

Mn(2+) contacts are provided by aspartate 10, aspartate 305, histidine 310, aspartate 346, histidine 347, and histidine 358.

The protein belongs to the phosphopentomutase family. The cofactor is Mn(2+).

It localises to the cytoplasm. It catalyses the reaction 2-deoxy-alpha-D-ribose 1-phosphate = 2-deoxy-D-ribose 5-phosphate. The catalysed reaction is alpha-D-ribose 1-phosphate = D-ribose 5-phosphate. The protein operates within carbohydrate degradation; 2-deoxy-D-ribose 1-phosphate degradation; D-glyceraldehyde 3-phosphate and acetaldehyde from 2-deoxy-alpha-D-ribose 1-phosphate: step 1/2. Its function is as follows. Isomerase that catalyzes the conversion of deoxy-ribose 1-phosphate (dRib-1-P) and ribose 1-phosphate (Rib-1-P) to deoxy-ribose 5-phosphate (dRib-5-P) and ribose 5-phosphate (Rib-5-P), respectively. The protein is Phosphopentomutase of Rhizobium johnstonii (strain DSM 114642 / LMG 32736 / 3841) (Rhizobium leguminosarum bv. viciae).